Here is a 409-residue protein sequence, read N- to C-terminus: Transcriptional regulator GME11370 (409 aa).

The zn(2)-C6 fungal-type DNA-binding region spans 17-44 (CHACAASKLKCSKEKPSCARCLKRNKPC). A disordered region spans residues 49–83 (TRRAGRHHGSRSKKVPTISPASAPEPQPFSTTPPD). Positions 51 to 62 (RAGRHHGSRSKK) are enriched in basic residues.

Its subcellular location is the nucleus. Transcriptional regulator; part of the gene cluster that mediates the biosynthesis of dibenzodioxocinones such as pestalotiollide B, a novel class of inhibitors against cholesterol ester transfer protein (CEPT). The chain is Transcriptional regulator GME11370 from Pestalotiopsis microspora.